A 130-amino-acid polypeptide reads, in one-letter code: Small ribosomal subunit protein uS9 (130 aa).

It belongs to the universal ribosomal protein uS9 family.

This is Small ribosomal subunit protein uS9 from Neisseria meningitidis serogroup C (strain 053442).